Consider the following 490-residue polypeptide: Vacuolar amino acid transporter 7 (490 aa).

The Cytoplasmic portion of the chain corresponds to 1-6 (MEATSS). Residues 7 to 27 (ALSSTANLVKTIVGAGTLAIP) traverse the membrane as a helical segment. Residues 28-34 (YSFKSDG) are Vacuolar-facing. The helical transmembrane segment at 35 to 55 (VLVGVILTLLAAVTSGLGLFV) threads the bilayer. Residues 56 to 84 (LSKCSKTLINPRNSSFFTLCMLTYPTLAP) lie on the Cytoplasmic side of the membrane. The chain crosses the membrane as a helical span at residues 85 to 105 (IFDLAMIVQCFGVGLSYLVLI). Topologically, residues 106–108 (GDL) are vacuolar. A helical transmembrane segment spans residues 109–129 (FPGLFGGERNYWIIASAVIII). The Cytoplasmic portion of the chain corresponds to 130 to 143 (PLCLVKKLDQLKYS). The helical transmembrane segment at 144 to 164 (SILGLFALAYISILVFSHFVF) threads the bilayer. Residues 165-190 (ELGKGELTNILRNDICWWKIHDFKGL) lie on the Vacuolar side of the membrane. Residues 191–211 (LSTFSIIIFAFTGSMNLFPMI) form a helical membrane-spanning segment. Over 212–221 (NELKDNSMEN) the chain is Cytoplasmic. Residues 222 to 242 (ITFVINNSISLSTALFLIVGL) form a helical membrane-spanning segment. Over 243–264 (SGYLTFGNETLGNLMLNYDPNS) the chain is Vacuolar. A helical transmembrane segment spans residues 265-285 (IWIVIGKFCLGSMLILSFPLL). The Cytoplasmic portion of the chain corresponds to 286-397 (FHPLRIAVNN…FVKSRFYWIT (112 aa)). The disordered stretch occupies residues 355 to 374 (NGNFDNGSIESQENNNDERG). Over residues 357-368 (NFDNGSIESQEN) the composition is skewed to polar residues. Residues 398–418 (ALLLISMYTLALSVQSFALVL) traverse the membrane as a helical segment. The Vacuolar portion of the chain corresponds to 419–428 (SFVGATGSTS). Residues 429–449 (ISFTLPGLLGYKLIGLDSLAI) form a helical membrane-spanning segment. Residues 450–463 (GKMIPPKDRFYKRC) are Cytoplasmic-facing. A helical membrane pass occupies residues 464–484 (SLLLVFYGLSVMFLSLYVTVF). Residues 485 to 490 (NRSDEA) are Vacuolar-facing.

Belongs to the amino acid/polyamine transporter 2 family.

Its subcellular location is the vacuole membrane. In terms of biological role, probable amino acid transporter of unknown specificity. The chain is Vacuolar amino acid transporter 7 (AVT7) from Saccharomyces cerevisiae (strain ATCC 204508 / S288c) (Baker's yeast).